Reading from the N-terminus, the 466-residue chain is Ribulose bisphosphate carboxylase large chain (466 aa).

At K5 the chain carries N6,N6,N6-trimethyllysine. Residues N114 and T164 each contribute to the substrate site. Catalysis depends on K166, which acts as the Proton acceptor. Residue K168 coordinates substrate. The Mg(2+) site is built by K192, D194, and E195. K192 is subject to N6-carboxylysine. The Proton acceptor role is filled by H285. Substrate-binding residues include R286, H318, and S370.

Belongs to the RuBisCO large chain family. Type I subfamily. Heterohexadecamer of 8 large chains and 8 small chains; disulfide-linked. The disulfide link is formed within the large subunit homodimers. Mg(2+) serves as cofactor. The disulfide bond which can form in the large chain dimeric partners within the hexadecamer appears to be associated with oxidative stress and protein turnover.

It localises to the plastid. It is found in the chloroplast. The enzyme catalyses 2 (2R)-3-phosphoglycerate + 2 H(+) = D-ribulose 1,5-bisphosphate + CO2 + H2O. It carries out the reaction D-ribulose 1,5-bisphosphate + O2 = 2-phosphoglycolate + (2R)-3-phosphoglycerate + 2 H(+). Its function is as follows. RuBisCO catalyzes two reactions: the carboxylation of D-ribulose 1,5-bisphosphate, the primary event in carbon dioxide fixation, as well as the oxidative fragmentation of the pentose substrate in the photorespiration process. Both reactions occur simultaneously and in competition at the same active site. This is Ribulose bisphosphate carboxylase large chain from Isophysis tasmanica.